An 887-amino-acid chain; its full sequence is Protein PTHB1 (887 aa).

The interval 1 to 407 (MSLFKARDWW…SQGVWPMTER (407 aa)) is seven-bladed beta-propeller. The interval 685–765 (KDKTPAPLQH…FLPLQEDTQE (81 aa)) is interaction with LZTL1. The segment at 850–887 (DLEERSVEQDSTELFTNHRHLTAETPRPEVSPLQGVSE) is disordered.

As to quaternary structure, part of BBSome complex, that contains BBS1, BBS2, BBS4, BBS5, BBS7, BBS8/TTC8, BBS9 and BBIP10. Interacts with LZTL1; the interaction mediates the association of LZTL1 with the BBsome complex and regulates BBSome ciliary trafficking. Widely expressed. Expressed in adult heart, skeletal muscle, lung, liver, kidney, placenta and brain, and in fetal kidney, lung, liver and brain.

The protein localises to the cytoplasm. It localises to the cytoskeleton. The protein resides in the microtubule organizing center. Its subcellular location is the centrosome. It is found in the cell projection. The protein localises to the cilium membrane. It localises to the centriolar satellite. Functionally, the BBSome complex is thought to function as a coat complex required for sorting of specific membrane proteins to the primary cilia. The BBSome complex is required for ciliogenesis but is dispensable for centriolar satellite function. This ciliogenic function is mediated in part by the Rab8 GDP/GTP exchange factor, which localizes to the basal body and contacts the BBSome. Rab8(GTP) enters the primary cilium and promotes extension of the ciliary membrane. Firstly the BBSome associates with the ciliary membrane and binds to RAB3IP/Rabin8, the guanosyl exchange factor (GEF) for Rab8 and then the Rab8-GTP localizes to the cilium and promotes docking and fusion of carrier vesicles to the base of the ciliary membrane. Required for proper BBSome complex assembly and its ciliary localization. The sequence is that of Protein PTHB1 (BBS9) from Homo sapiens (Human).